Consider the following 453-residue polypeptide: Proton extrusion protein PxcA (453 aa).

A disordered region spans residues 147-189 (SQDKETQTLDNKSTNQTNSKLSNNNKISSGQNDSRLESASQKT). Polar residues predominate over residues 154 to 163 (TLDNKSTNQT). The segment covering 164-175 (NSKLSNNNKISS) has biased composition (low complexity). Positions 176-189 (GQNDSRLESASQKT) are enriched in polar residues. 4 helical membrane-spanning segments follow: residues 235-255 (FILL…TFLL), 330-350 (SIGN…VIVS), 377-397 (LIIL…WEVI), and 413-433 (FNFL…KYWI).

This sequence belongs to the CemA family.

The protein resides in the cell inner membrane. Functionally, required for H(+) efflux immediately after light irradiation to form a rapid H(+) concentration gradient across the thylakoid membranes. Together with PxcL, contributes to transient H(+) uptake following dark to light transition. The sequence is that of Proton extrusion protein PxcA from Crocosphaera subtropica (strain ATCC 51142 / BH68) (Cyanothece sp. (strain ATCC 51142)).